Consider the following 467-residue polypeptide: NADH-ubiquinone oxidoreductase chain 4 (467 aa).

13 helical membrane passes run 21 to 40 (SMSK…PTLY), 54 to 74 (MADV…ISNW), 79 to 99 (STLY…NFMC), 105 to 125 (FYMY…LYGA), 135 to 155 (VLMY…LYEV), 168 to 188 (LVLS…GIAV), 207 to 227 (PLAG…FAMI), 239 to 259 (VTYT…TSII), 266 to 286 (LKVI…LGML), 297 to 317 (LVLC…VGGM), 330 to 350 (FQGL…LSFC), 367 to 387 (LTGA…SVLL), and 420 to 440 (VLMI…SWVM).

Belongs to the complex I subunit 4 family.

It is found in the mitochondrion membrane. It carries out the reaction a ubiquinone + NADH + 5 H(+)(in) = a ubiquinol + NAD(+) + 4 H(+)(out). In terms of biological role, core subunit of the mitochondrial membrane respiratory chain NADH dehydrogenase (Complex I) that is believed to belong to the minimal assembly required for catalysis. Complex I functions in the transfer of electrons from NADH to the respiratory chain. The immediate electron acceptor for the enzyme is believed to be ubiquinone. The polypeptide is NADH-ubiquinone oxidoreductase chain 4 (ND4) (Debaryomyces hansenii (strain ATCC 36239 / CBS 767 / BCRC 21394 / JCM 1990 / NBRC 0083 / IGC 2968) (Yeast)).